Consider the following 227-residue polypeptide: 2-C-methyl-D-erythritol 4-phosphate cytidylyltransferase (227 aa).

Belongs to the IspD/TarI cytidylyltransferase family. IspD subfamily.

The enzyme catalyses 2-C-methyl-D-erythritol 4-phosphate + CTP + H(+) = 4-CDP-2-C-methyl-D-erythritol + diphosphate. Its pathway is isoprenoid biosynthesis; isopentenyl diphosphate biosynthesis via DXP pathway; isopentenyl diphosphate from 1-deoxy-D-xylulose 5-phosphate: step 2/6. In terms of biological role, catalyzes the formation of 4-diphosphocytidyl-2-C-methyl-D-erythritol from CTP and 2-C-methyl-D-erythritol 4-phosphate (MEP). The polypeptide is 2-C-methyl-D-erythritol 4-phosphate cytidylyltransferase (Deinococcus geothermalis (strain DSM 11300 / CIP 105573 / AG-3a)).